The primary structure comprises 144 residues: Ribonuclease VapC37 (144 aa).

A PINc domain is found at 3 to 137; it reads IVDANVLLYA…DFGRFEGVRW (135 aa). 2 residues coordinate Mg(2+): Asp5 and Asp90.

This sequence belongs to the PINc/VapC protein family. It depends on Mg(2+) as a cofactor.

It localises to the secreted. Probable toxic component of a type II toxin-antitoxin (TA) system. An RNase. Upon expression in M.smegmatis inhibits colony formation. The putative cognate antitoxin is VapB37. In Mycobacterium tuberculosis (strain ATCC 25618 / H37Rv), this protein is Ribonuclease VapC37.